Here is a 349-residue protein sequence, read N- to C-terminus: MLLSFLPLLPLATAALTYRGADISSLLIEEDAGIAYKNLNGQTQALESILADNGVNSIRQRLWVNPSDGSYDLDYNLKLAKRAKAAGMSVYLDLHYSDTWADPSHQTTPAGWSTDDIGTLAWQVYNYTKEVCDTFAANDIALEMVSIGNEIRNGLLWPLGATDSYPNIARLLHSGAWGVKDSALATTPQILLHLDNGWDWAAQKYFYDTVLAAGSELTSADFDLIGVSYYPFYNADATLSALKTSLGNLASAYGKKVLVVETNWPVACPNPEYQFPADLADIPFSVDGQSTFLRRLGEVVAGTDGGAGVYYWEPAWTKNAGLGSSCQDNLLVDYNTDQVRASISALGGI.

The N-terminal stretch at 1–15 (MLLSFLPLLPLATAA) is a signal peptide. N126 is a glycosylation site (N-linked (GlcNAc...) asparagine). E150 functions as the Proton donor in the catalytic mechanism. The Nucleophile role is filled by E261.

This sequence belongs to the glycosyl hydrolase 53 family.

The protein resides in the secreted. It carries out the reaction The enzyme specifically hydrolyzes (1-&gt;4)-beta-D-galactosidic linkages in type I arabinogalactans.. Its function is as follows. Endogalactanase involved in the degradation of plant cell wall polysaccharides, and more particularly of hairy regions of pectin. The sequence is that of Probable arabinogalactan endo-beta-1,4-galactanase A (galA) from Aspergillus terreus (strain NIH 2624 / FGSC A1156).